The sequence spans 550 residues: Medium-chain acyl-CoA ligase Mig (550 aa).

Positions 1 to 19 (MSDTTTAFTVPAVAKAVAA) are cleaved as a signal peptide.

The protein belongs to the ATP-dependent AMP-binding enzyme family.

Its subcellular location is the secreted. It localises to the cell wall. The catalysed reaction is a medium-chain fatty acid + ATP + CoA = a medium-chain fatty acyl-CoA + AMP + diphosphate. It carries out the reaction hexanoate + ATP + CoA = hexanoyl-CoA + AMP + diphosphate. It catalyses the reaction heptanoate + ATP + CoA = heptanoyl-CoA + AMP + diphosphate. The enzyme catalyses octanoate + ATP + CoA = octanoyl-CoA + AMP + diphosphate. The catalysed reaction is decanoate + ATP + CoA = decanoyl-CoA + AMP + diphosphate. It carries out the reaction dodecanoate + ATP + CoA = dodecanoyl-CoA + AMP + diphosphate. It catalyses the reaction tetradecanoate + ATP + CoA = tetradecanoyl-CoA + AMP + diphosphate. The enzyme catalyses (9Z)-octadecenoate + ATP + CoA = (9Z)-octadecenoyl-CoA + AMP + diphosphate. The catalysed reaction is (9Z,12Z,15Z)-octadecatrienoate + ATP + CoA = (9Z,12Z,15Z)-octadecatrienoyl-CoA + AMP + diphosphate. It carries out the reaction (5Z,8Z,11Z,14Z)-eicosatetraenoate + ATP + CoA = (5Z,8Z,11Z,14Z)-eicosatetraenoyl-CoA + AMP + diphosphate. It participates in lipid metabolism; fatty acid metabolism. Its activity is regulated as follows. Inhibited by 2-hydroxydodecanoic acid, a typical inhibitor of medium-chain acyl-CoA synthetases. Catalyzes the activation of medium-chain fatty acids as acyl-coenzyme A (acyl-CoA). Shows maximal activity with saturated fatty acids of medium-chain length between C6 and C12. Has lower activity with tridecanoic acid (C13), tetradecanoic acid (C14) and with unsaturated fatty acids like oleic acid (C18:1), linolenic acid (C18:3) and arachidonic acid (C20:4). Shows weak activity with some aromatic carbon acids. Involved in the metabolism of fatty acid during mycobacterial survival in macrophages. This chain is Medium-chain acyl-CoA ligase Mig, found in Mycobacterium avium.